Here is a 323-residue protein sequence, read N- to C-terminus: MAEERSLNGEATGQDDESFFDSDQQGDDGKSTELNQKIGDLESQNQELARDNDAINRKIESLTAEIEELRGAESKAKRKMGEMEREIDKSDEERKVLEAIASRASELETEVARLQHELITARTEGEEATAEAEKLRSEISQKGGGIEELEKEVAGLRTVKEENEKRMKELESKLGALEVKELDEKNKKFRAEEEMREKIDNKEKEVHDLKEKIKSLESDVAKGKTELQKWITEKMVVEDSLKDSEKKVVALESEIVELQKQLDDAEKMINGLKNVVEEPLNGIEFKSWSPNVTAVGSGGAVAAVAVAVAGAAVVCYIYHSRRV.

Disordered stretches follow at residues 1 to 55, 73 to 92, and 120 to 143; these read MAEE…NDAI, ESKA…KSDE, and TART…SQKG. The Cytoplasmic portion of the chain corresponds to 1–297; the sequence is MAEERSLNGE…WSPNVTAVGS (297 aa). Residues 13 to 26 are compositionally biased toward acidic residues; the sequence is GQDDESFFDSDQQG. The stretch at 28 to 278 forms a coiled coil; it reads DGKSTELNQK…INGLKNVVEE (251 aa). Residues 298-318 traverse the membrane as a helical segment; that stretch reads GGAVAAVAVAVAGAAVVCYIY. Topologically, residues 319–323 are mitochondrial intermembrane; it reads HSRRV.

In terms of assembly, homodimer. Interacts with PMD1.

It is found in the mitochondrion outer membrane. In terms of biological role, involved in morphogenesis and proliferation of mitochondria. Does not act redundantly with PMD1. Is not involved in peroxisomal proliferation. In Arabidopsis thaliana (Mouse-ear cress), this protein is Peroxisomal and mitochondrial division factor 2.